The following is a 403-amino-acid chain: Phosphoglycerate kinase (403 aa).

Substrate contacts are provided by residues 21–23 (DFN), arginine 36, 59–62 (HLGR), arginine 118, and arginine 151. Residues lysine 202, glutamate 328, and 354–357 (GGDS) contribute to the ATP site.

Belongs to the phosphoglycerate kinase family. In terms of assembly, monomer.

Its subcellular location is the cytoplasm. It carries out the reaction (2R)-3-phosphoglycerate + ATP = (2R)-3-phospho-glyceroyl phosphate + ADP. Its pathway is carbohydrate degradation; glycolysis; pyruvate from D-glyceraldehyde 3-phosphate: step 2/5. The sequence is that of Phosphoglycerate kinase from Akkermansia muciniphila (strain ATCC BAA-835 / DSM 22959 / JCM 33894 / BCRC 81048 / CCUG 64013 / CIP 107961 / Muc).